We begin with the raw amino-acid sequence, 458 residues long: UDP-N-acetylmuramate--L-alanine ligase (458 aa).

118-124 (GTHGKTT) lines the ATP pocket.

This sequence belongs to the MurCDEF family.

It is found in the cytoplasm. The catalysed reaction is UDP-N-acetyl-alpha-D-muramate + L-alanine + ATP = UDP-N-acetyl-alpha-D-muramoyl-L-alanine + ADP + phosphate + H(+). It participates in cell wall biogenesis; peptidoglycan biosynthesis. Cell wall formation. The polypeptide is UDP-N-acetylmuramate--L-alanine ligase (Clostridium botulinum (strain Loch Maree / Type A3)).